Reading from the N-terminus, the 202-residue chain is Putative NAD(P)H nitroreductase YodC (202 aa).

Residues 11–13 (RAS), 68–70 (QKQ), 155–156 (GG), and Arg-192 contribute to the FMN site.

Belongs to the nitroreductase family. FMN is required as a cofactor.

The protein localises to the cytoplasm. Functionally, putative nitroreductase that may contribute to the degradation of aromatic compounds. The polypeptide is Putative NAD(P)H nitroreductase YodC (yodC) (Bacillus subtilis (strain 168)).